The chain runs to 264 residues: Phosphatidylglycerol--prolipoprotein diacylglyceryl transferase (264 aa).

Helical transmembrane passes span 14–34, 60–80, 98–118, 128–148, 176–196, 203–223, and 240–260; these read IIFS…LIGF, LIYT…VFFY, GGMS…WVSF, ADFI…GNFI, SQLY…NWFI, GSVA…VEYV, and GQLL…WAYS. Arg-143 provides a ligand contact to a 1,2-diacyl-sn-glycero-3-phospho-(1'-sn-glycerol).

This sequence belongs to the Lgt family.

Its subcellular location is the cell inner membrane. It carries out the reaction L-cysteinyl-[prolipoprotein] + a 1,2-diacyl-sn-glycero-3-phospho-(1'-sn-glycerol) = an S-1,2-diacyl-sn-glyceryl-L-cysteinyl-[prolipoprotein] + sn-glycerol 1-phosphate + H(+). The protein operates within protein modification; lipoprotein biosynthesis (diacylglyceryl transfer). Functionally, catalyzes the transfer of the diacylglyceryl group from phosphatidylglycerol to the sulfhydryl group of the N-terminal cysteine of a prolipoprotein, the first step in the formation of mature lipoproteins. The sequence is that of Phosphatidylglycerol--prolipoprotein diacylglyceryl transferase from Actinobacillus pleuropneumoniae serotype 7 (strain AP76).